Here is a 1390-residue protein sequence, read N- to C-terminus: DNA-directed RNA polymerase III subunit RPC1 (1390 aa).

Positions 69, 72, 79, 82, 109, and 112 each coordinate Zn(2+). Position 144 (Lys144) interacts with DNA. 2 residues coordinate Zn(2+): Cys156 and Cys159. DNA is bound by residues Lys167, Ser326, Lys348, Arg353, Arg360, and Arg366. An N6-acetyllysine modification is found at Lys445. Arg464 is a binding site for RNA. Positions 499, 501, and 503 each coordinate Mg(2+). Asp503 is a binding site for RNA. The segment at 844–856 (PTEFFFHTMAGRE) is bridging helix. Positions 1159, 1305, and 1323 each coordinate DNA.

It belongs to the RNA polymerase beta' chain family. In terms of assembly, component of the RNA polymerase III (Pol III) complex consisting of 17 subunits: a ten-subunit catalytic core composed of POLR3A/RPC1, POLR3B/RPC2, POLR1C/RPAC1, POLR1D/RPAC2, POLR3K/RPC10, POLR2E/RPABC1, POLR2F/RPABC2, POLR2H/RPABC3, POLR2K/RPABC4 and POLR2L/RPABC5; a mobile stalk composed of two subunits POLR3H/RPC8 and CRCP/RPC9, protruding from the core and functioning primarily in transcription initiation; and additional subunits homologous to general transcription factors of the RNA polymerase II machinery, POLR3C/RPC3-POLR3F/RPC6-POLR3G/RPC7 heterotrimer required for transcription initiation and POLR3D/RPC4-POLR3E/RPC5 heterodimer involved in both transcription initiation and termination. As part of the RNA polymerase III complex, interacts with PKP2. It depends on Mg(2+) as a cofactor.

The protein resides in the nucleus. The protein localises to the cytoplasm. It localises to the cytosol. The enzyme catalyses RNA(n) + a ribonucleoside 5'-triphosphate = RNA(n+1) + diphosphate. In terms of biological role, catalytic core component of RNA polymerase III (Pol III), a DNA-dependent RNA polymerase which synthesizes small non-coding RNAs using the four ribonucleoside triphosphates as substrates. Synthesizes 5S rRNA, snRNAs, tRNAs and miRNAs from at least 500 distinct genomic loci. Pol III-mediated transcription cycle proceeds through transcription initiation, transcription elongation and transcription termination stages. During transcription initiation, Pol III is recruited to DNA promoters type I, II or III with the help of general transcription factors and other specific initiation factors. Once the polymerase has escaped from the promoter it enters the elongation phase during which RNA is actively polymerized, based on complementarity with the template DNA strand. Transcription termination involves the release of the RNA transcript and polymerase from the DNA. Forms Pol III active center together with the second largest subunit POLR3B/RPC2. Appends one nucleotide at a time to the 3' end of the nascent RNA, with POLR3A/RPC1 contributing a Mg(2+)-coordinating DxDGD motif, and POLR3B/RPC2 participating in the coordination of a second Mg(2+) ion and providing lysine residues believed to facilitate Watson-Crick base pairing between the incoming nucleotide and template base. Typically, Mg(2+) ions direct a 5' nucleoside triphosphate to form a phosphodiester bond with the 3' hydroxyl of the preceding nucleotide of the nascent RNA, with the elimination of pyrophosphate. Pol III plays a key role in sensing and limiting infection by intracellular bacteria and DNA viruses. Acts as a nuclear and cytosolic DNA sensor involved in innate immune response. Can sense non-self dsDNA that serves as template for transcription into dsRNA. The non-self RNA polymerase III transcripts, such as Epstein-Barr virus-encoded RNAs (EBERs) induce type I interferon and NF-kappa-B through the RIG-I pathway. This Bos taurus (Bovine) protein is DNA-directed RNA polymerase III subunit RPC1.